A 698-amino-acid chain; its full sequence is MIPQLLQRSSRACPRYNPALYRLSTTSQQRPGLTQTFWTSAPRREQPRTPTDSKPTTTKPSAVFPANKKATKQNDPLVTVEKSAPEQRKADWAIMKEMTRYLWPKDDWGTKLRVSLAVSLLIGAKVLNVQVPFYFKSIVDSMNIDVAAVGGTATTVAGAMILAYGASRIGATVFQELRNAVFASVAQNAIRKVACNVFDHLLRLDLTFHLSKQTGGLTRALDRGTKGISFILSSMVFHVLPTALEISMVCGILTYNYGAKFAALTVLTMVSYTAFTIWTTAWRTKFRRQANAADNKASTVAVDSLINYEAVKYFNNEKFEVARYDKALGQYEKNSIKVATSLALLNSGQNIIFSSALTGMMYLAANGVAEGTLTVGDLVMVNQLVFQLSVPLNFLGSVYRELRQSLLDMETLFNLQKVNANIKEKAGAKPLVLSKGGEIKFENVNFAYHPNRPILRDLSLTIPAGKKVAVVGPSGCGKSTLLRLLFRSYDVQGGRVLIDDQDIRDVDLESLRRSIGVVPQDTPLFNDTVEHNIRYGSINATHEEVVAVAKRAHVHNTIQSFPDGYETKVGERGLMISGGEKQRLAVSRILLKDPPLLFFDEATSALDTHTEQALMMNINSILRERGRTSVFVAHRLRTIFDSDLIIVLKEGHVAEMGTHRELIDRDGVYAELWSAQETMFGEDGKEKSEEENDEQKKN.

A mitochondrion-targeting transit peptide spans 1-23; sequence MIPQLLQRSSRACPRYNPALYRL. The Mitochondrial matrix segment spans residues 24-113; that stretch reads STTSQQRPGL…PKDDWGTKLR (90 aa). Positions 32–63 are disordered; it reads GLTQTFWTSAPRREQPRTPTDSKPTTTKPSAV. Residues 48-61 show a composition bias toward low complexity; it reads RTPTDSKPTTTKPS. The chain crosses the membrane as a helical span at residues 114–135; it reads VSLAVSLLIGAKVLNVQVPFYF. One can recognise an ABC transmembrane type-1 domain in the interval 114–404; that stretch reads VSLAVSLLIG…LGSVYRELRQ (291 aa). Over 136-158 the chain is Mitochondrial intermembrane; that stretch reads KSIVDSMNIDVAAVGGTATTVAG. A helical transmembrane segment spans residues 159 to 182; it reads AMILAYGASRIGATVFQELRNAVF. At 183–231 the chain is on the mitochondrial matrix side; the sequence is ASVAQNAIRKVACNVFDHLLRLDLTFHLSKQTGGLTRALDRGTKGISFI. Residues 232–255 traverse the membrane as a helical segment; sequence LSSMVFHVLPTALEISMVCGILTY. Residue Asn256 is a topological domain, mitochondrial intermembrane. The helical transmembrane segment at 257–277 threads the bilayer; it reads YGAKFAALTVLTMVSYTAFTI. Topologically, residues 278–343 are mitochondrial matrix; that stretch reads WTTAWRTKFR…NSIKVATSLA (66 aa). Glutathione is bound by residues 283–287 and 346–349; these read RTKFR and NSGQ. Residues 344 to 362 form a helical membrane-spanning segment; that stretch reads LLNSGQNIIFSSALTGMMY. At 363–377 the chain is on the mitochondrial intermembrane side; sequence LAANGVAEGTLTVGD. Residues 378 to 399 traverse the membrane as a helical segment; that stretch reads LVMVNQLVFQLSVPLNFLGSVY. Gly396 is a glutathione binding site. Residues 400-698 lie on the Mitochondrial matrix side of the membrane; that stretch reads RELRQSLLDM…EEENDEQKKN (299 aa). Residues 439 to 675 enclose the ABC transporter domain; that stretch reads IKFENVNFAY…DGVYAELWSA (237 aa). ATP contacts are provided by residues Tyr448 and 472–483; that span reads GPSGCGKSTLLR. A disordered region spans residues 679-698; the sequence is MFGEDGKEKSEEENDEQKKN. Residues 682-698 are compositionally biased toward basic and acidic residues; it reads EDGKEKSEEENDEQKKN.

Belongs to the ABC transporter superfamily. ABCB family. Heavy Metal importer (TC 3.A.1.210) subfamily. In terms of assembly, homodimer.

It localises to the mitochondrion inner membrane. In terms of biological role, performs an essential function in the generation of cytoplasmic iron-sulfur proteins by mediating the ATP-dependent export of Fe/S cluster precursors synthesized by NFS1 and other mitochondrial proteins. Hydrolyzes ATP. Binds glutathione and may function by transporting a glutathione-conjugated iron-sulfur compound. The sequence is that of Iron-sulfur clusters transporter ATM1, mitochondrial from Gibberella zeae (strain ATCC MYA-4620 / CBS 123657 / FGSC 9075 / NRRL 31084 / PH-1) (Wheat head blight fungus).